Reading from the N-terminus, the 284-residue chain is Putative ABC transporter ATP-binding protein tll2439 (284 aa).

The ABC transporter domain maps to 6–242 (LEFHQVGFRY…WPTFAPELGT (237 aa)). 40–47 (GLNGSGKS) serves as a coordination point for ATP.

It belongs to the ABC transporter superfamily.

It is found in the cell inner membrane. Probably part of an ABC transporter complex. Responsible for energy coupling to the transport system. In Thermosynechococcus vestitus (strain NIES-2133 / IAM M-273 / BP-1), this protein is Putative ABC transporter ATP-binding protein tll2439.